We begin with the raw amino-acid sequence, 354 residues long: Uroporphyrinogen decarboxylase (354 aa).

Residues 27–31 (RQAGR), Asp77, Tyr154, Thr209, and His327 contribute to the substrate site.

This sequence belongs to the uroporphyrinogen decarboxylase family. In terms of assembly, homodimer.

It is found in the cytoplasm. It catalyses the reaction uroporphyrinogen III + 4 H(+) = coproporphyrinogen III + 4 CO2. The protein operates within porphyrin-containing compound metabolism; protoporphyrin-IX biosynthesis; coproporphyrinogen-III from 5-aminolevulinate: step 4/4. Catalyzes the decarboxylation of four acetate groups of uroporphyrinogen-III to yield coproporphyrinogen-III. The chain is Uroporphyrinogen decarboxylase from Psychromonas ingrahamii (strain DSM 17664 / CCUG 51855 / 37).